The sequence spans 465 residues: Argininosuccinate lyase (465 aa).

Belongs to the lyase 1 family. Argininosuccinate lyase subfamily.

The protein resides in the cytoplasm. It catalyses the reaction 2-(N(omega)-L-arginino)succinate = fumarate + L-arginine. The protein operates within amino-acid biosynthesis; L-arginine biosynthesis; L-arginine from L-ornithine and carbamoyl phosphate: step 3/3. This chain is Argininosuccinate lyase, found in Rhodopseudomonas palustris (strain HaA2).